We begin with the raw amino-acid sequence, 433 residues long: D-amino acid dehydrogenase (433 aa).

3-17 contacts FAD; sequence VLVLGSGVIGTTSAY.

Belongs to the DadA oxidoreductase family. It depends on FAD as a cofactor.

The enzyme catalyses a D-alpha-amino acid + A + H2O = a 2-oxocarboxylate + AH2 + NH4(+). Functionally, oxidative deamination of D-amino acids. This chain is D-amino acid dehydrogenase, found in Pseudomonas syringae pv. tomato (strain ATCC BAA-871 / DC3000).